The primary structure comprises 321 residues: Peptidase 1 (321 aa).

The first 18 residues, 1–18 (MKIILAIASLLVLSAVYA), serve as a signal peptide directing secretion. Positions 19-98 (RPASIKTFEE…LKTQFDLNAE (80 aa)) are excised as a propeptide. Residue Asn34 is glycosylated (N-linked (GlcNAc...) asparagine). A disulfide bridge links Cys130 with Cys170. Cys133 is an active-site residue. Residue Asn151 is glycosylated (N-linked (GlcNAc...) asparagine). Active-site residues include His269 and Asn289.

It belongs to the peptidase C1 family.

It is found in the secreted. It catalyses the reaction Broad endopeptidase specificity.. In terms of biological role, probable thiol protease. The chain is Peptidase 1 (EURM1) from Euroglyphus maynei (Mayne's house dust mite).